Consider the following 560-residue polypeptide: MKKVLNKYSRRLTEDKSQGASQAMLYGTGMNDADMHKPQIGIGSVWYEGNTCNMHLNQLAQFVKDSVEKENLKGMRFNTIGVSDGISMGTDGMSYSLQSRDLIADSIETVMSAHWYDGLISIPGCDKNMPGCMMALGRLNRPGFVIYGGTIQAGVMRGKPIDIVTAFQSYGACLSGQITEQERQETIKKACPGAGACGGMYTANTMACAIEALGMSLPFSSSTPATSVEKVQECDKAGETIKNLLELDIKPRDIMTRKAFENAMVLITVMGGSTNAVLHLLAMASSVDVDLSIDDFQEIANKTPVLADFKPSGKYVMADLHAIGGTPAVMKMLLKAGMLHGDCLTVTGKTLAENLENVADLPEDNTIIHKLDNPIKKTGHLQILKGNVAPEGSVAKITGKEGEVFEGVANVFDSEEEMVAAVEEGKVKKGDVIVIRYEGPKGGPGMPEMLKPTSLIMGAGLGQDVALITDGRFSGGSHGFIVGHIAPEAYEGGMIALLENGDKITIDAINNVINVDLSDQEIAQRKSKWRAPKQKASRGTLKKYIKTVSSASTGCVTDLD.

Position 52 (cysteine 52) interacts with [2Fe-2S] cluster. A Mg(2+)-binding site is contributed by aspartate 84. Cysteine 125 contacts [2Fe-2S] cluster. Aspartate 126 and lysine 127 together coordinate Mg(2+). An N6-carboxylysine modification is found at lysine 127. A [2Fe-2S] cluster-binding site is contributed by cysteine 197. Glutamate 448 is a binding site for Mg(2+). The active-site Proton acceptor is serine 474.

This sequence belongs to the IlvD/Edd family. In terms of assembly, homodimer. [2Fe-2S] cluster serves as cofactor. The cofactor is Mg(2+).

The enzyme catalyses (2R)-2,3-dihydroxy-3-methylbutanoate = 3-methyl-2-oxobutanoate + H2O. It carries out the reaction (2R,3R)-2,3-dihydroxy-3-methylpentanoate = (S)-3-methyl-2-oxopentanoate + H2O. It functions in the pathway amino-acid biosynthesis; L-isoleucine biosynthesis; L-isoleucine from 2-oxobutanoate: step 3/4. Its pathway is amino-acid biosynthesis; L-valine biosynthesis; L-valine from pyruvate: step 3/4. Functionally, functions in the biosynthesis of branched-chain amino acids. Catalyzes the dehydration of (2R,3R)-2,3-dihydroxy-3-methylpentanoate (2,3-dihydroxy-3-methylvalerate) into 2-oxo-3-methylpentanoate (2-oxo-3-methylvalerate) and of (2R)-2,3-dihydroxy-3-methylbutanoate (2,3-dihydroxyisovalerate) into 2-oxo-3-methylbutanoate (2-oxoisovalerate), the penultimate precursor to L-isoleucine and L-valine, respectively. This is Dihydroxy-acid dehydratase from Francisella tularensis subsp. novicida (strain U112).